A 157-amino-acid chain; its full sequence is uncharacterized protein (157 aa).

In terms of domain architecture, HD spans 33 to 134 (NLKHFLDVAR…MYRADKLSRL (102 aa)).

This is an uncharacterized protein from Clostridium beijerinckii (strain ATCC 51743 / NCIMB 8052) (Clostridium acetobutylicum).